The following is a 327-amino-acid chain: L-serine dehydratase/L-threonine deaminase (327 aa).

Ala2 bears the N-acetylalanine mark. Lys41 is subject to N6-(pyridoxal phosphate)lysine. Pyridoxal 5'-phosphate is bound at residue Pro128.

Belongs to the serine/threonine dehydratase family. As to quaternary structure, homodimer. Pyridoxal 5'-phosphate is required as a cofactor.

The protein resides in the cytoplasm. The catalysed reaction is L-serine = pyruvate + NH4(+). The enzyme catalyses L-threonine = 2-oxobutanoate + NH4(+). It functions in the pathway carbohydrate biosynthesis; gluconeogenesis. In terms of biological role, catalyzes the pyridoxal-phosphate-dependent dehydrative deamination of L-threonine and L-serine to ammonia and alpha-ketobutyrate and pyruvate, respectively. This Mus musculus (Mouse) protein is L-serine dehydratase/L-threonine deaminase (Sds).